The sequence spans 202 residues: Recombination protein RecR (202 aa).

A C4-type zinc finger spans residues 59–74 (CSVCFHLSAEPVCEIC). In terms of domain architecture, Toprim spans 82 to 176 (HTICVVADSR…KVTRIAFGLP (95 aa)).

It belongs to the RecR family.

Its function is as follows. May play a role in DNA repair. It seems to be involved in an RecBC-independent recombinational process of DNA repair. It may act with RecF and RecO. This is Recombination protein RecR from Thermosynechococcus vestitus (strain NIES-2133 / IAM M-273 / BP-1).